The primary structure comprises 157 residues: SsrA-binding protein (157 aa).

A compositionally biased stretch (basic and acidic residues) spans 138–151; that stretch reads ATEAKRDWGREKQR. Residues 138-157 form a disordered region; that stretch reads ATEAKRDWGREKQRLLKQHS.

This sequence belongs to the SmpB family.

The protein localises to the cytoplasm. Its function is as follows. Required for rescue of stalled ribosomes mediated by trans-translation. Binds to transfer-messenger RNA (tmRNA), required for stable association of tmRNA with ribosomes. tmRNA and SmpB together mimic tRNA shape, replacing the anticodon stem-loop with SmpB. tmRNA is encoded by the ssrA gene; the 2 termini fold to resemble tRNA(Ala) and it encodes a 'tag peptide', a short internal open reading frame. During trans-translation Ala-aminoacylated tmRNA acts like a tRNA, entering the A-site of stalled ribosomes, displacing the stalled mRNA. The ribosome then switches to translate the ORF on the tmRNA; the nascent peptide is terminated with the 'tag peptide' encoded by the tmRNA and targeted for degradation. The ribosome is freed to recommence translation, which seems to be the essential function of trans-translation. The sequence is that of SsrA-binding protein from Cereibacter sphaeroides (strain ATCC 17025 / ATH 2.4.3) (Rhodobacter sphaeroides).